The following is a 533-amino-acid chain: Protein mono-ADP-ribosyltransferase PARP3 (533 aa).

The tract at residues 1–30 is disordered; that stretch reads MAPKRKASVQTEGSKKRRQGTEEEDSFRST. The residue at position 6 (Lys-6) is an N6-(ADP-ribosyl)lysine. Residue Glu-12 is modified to ADP-ribosyl glutamic acid. The Nuclear localization signal motif lies at 14 to 18; that stretch reads SKKRR. ADP-ribosyl glutamic acid occurs at positions 24 and 32. A WGR domain is found at 57-147; it reads GIQVHEDYDC…DRFVAQPNKY (91 aa). Asp-138 carries the post-translational modification ADP-ribosyl aspartic acid. Glu-160, Glu-230, Glu-309, and Glu-310 each carry ADP-ribosyl glutamic acid. Residues 181–299 form the PARP alpha-helical domain; that stretch reads PCSLDPATQN…DIELAQTLQA (119 aa). Residues 313–533 enclose the PARP catalytic domain; that stretch reads HPLDRDYQLL…RLRYLLEIHL (221 aa).

This sequence belongs to the ARTD/PARP family. As to quaternary structure, interacts with PARP1; leading to activate PARP1 in absence of DNA. Interacts with PRKDC. Interacts with XRCC5/Ku80; the interaction is dependent on nucleic acids. Interacts with XRCC6/Ku70; the interaction is dependent on nucleic acids. Interacts with EZH2, HDAC1, HDAC2, SUZ12, YY1, LRIG3 and LIG4. In terms of processing, auto-ADP-ribosylated.

The protein localises to the nucleus. It is found in the chromosome. It localises to the cytoplasm. Its subcellular location is the cytoskeleton. The protein resides in the microtubule organizing center. The protein localises to the centrosome. It is found in the centriole. The catalysed reaction is L-aspartyl-[protein] + NAD(+) = 4-O-(ADP-D-ribosyl)-L-aspartyl-[protein] + nicotinamide. It catalyses the reaction L-glutamyl-[protein] + NAD(+) = 5-O-(ADP-D-ribosyl)-L-glutamyl-[protein] + nicotinamide. It carries out the reaction L-lysyl-[protein] + NAD(+) = N(6)-(ADP-D-ribosyl)-L-lysyl-[protein] + nicotinamide + H(+). Functionally, mono-ADP-ribosyltransferase that mediates mono-ADP-ribosylation of target proteins and plays a key role in the response to DNA damage. Mediates mono-ADP-ribosylation of glutamate, aspartate or lysine residues on target proteins. In contrast to PARP1 and PARP2, it is not able to mediate poly-ADP-ribosylation. Involved in DNA repair by mediating mono-ADP-ribosylation of a limited number of acceptor proteins involved in chromatin architecture and in DNA metabolism, such as histone H2B, XRCC5 and XRCC6. ADP-ribosylation follows DNA damage and appears as an obligatory step in a detection/signaling pathway leading to the reparation of DNA strand breaks. Involved in single-strand break repair by catalyzing mono-ADP-ribosylation of histone H2B on 'Glu-2' (H2BE2ADPr) of nucleosomes containing nicked DNA. Cooperates with the XRCC5-XRCC6 (Ku80-Ku70) heterodimer to limit end-resection thereby promoting accurate NHEJ. Suppresses G-quadruplex (G4) structures in response to DNA damage. Associates with a number of DNA repair factors and is involved in the response to exogenous and endogenous DNA strand breaks. Together with APLF, promotes the retention of the LIG4-XRCC4 complex on chromatin and accelerate DNA ligation during non-homologous end-joining (NHEJ). May link the DNA damage surveillance network to the mitotic fidelity checkpoint. Acts as a negative regulator of immunoglobulin class switch recombination, probably by controlling the level of AICDA /AID on the chromatin. In addition to proteins, also able to ADP-ribosylate DNA: mediates DNA mono-ADP-ribosylation of DNA strand break termini via covalent addition of a single ADP-ribose moiety to a 5'- or 3'-terminal phosphate residues in DNA containing multiple strand breaks. The chain is Protein mono-ADP-ribosyltransferase PARP3 from Mus musculus (Mouse).